The following is a 1232-amino-acid chain: Dynactin subunit 1 (1232 aa).

Residues 31–73 enclose the CAP-Gly domain; the sequence is GATLFATGKWVGVILDDSKGKNDGTVQGRRYFTCEENHGIFVR. Disordered stretches follow at residues 82–183 and 339–358; these read DGAD…AQVK and SASE…KKNT. A compositionally biased stretch (low complexity) spans 86–95; sequence TTSPETPEPT. Over residues 108–117 the composition is skewed to polar residues; sequence PKSSKLPTRP. The segment covering 118–130 has biased composition (low complexity); it reads SSSAASSGTASAS. Residues 133-144 are compositionally biased toward polar residues; the sequence is EISSSEPSTPAQ. The span at 146–163 shows a compositional bias: low complexity; that stretch reads PLAAPIIPSPSSAITSPV. Coiled coils occupy residues 170–505, 908–1005, 1046–1071, and 1136–1166; these read GPSK…KEQQ, ETVI…RTIE, LLLQ…LKAH, and AAQL…ETVS. Over residues 172 to 183 the composition is skewed to basic and acidic residues; that stretch reads SKEEENLRAQVK.

The protein belongs to the dynactin 150 kDa subunit family. In terms of assembly, monomer and homodimer. Subunit of dynactin, a multiprotein complex part of a tripartite complex with dynein and a adapter, such as BICDL1, BICD2 or HOOK3. The dynactin complex is built around ACTR1A/ACTB filament and consists of an actin-related filament composed of a shoulder domain, a pointed end and a barbed end. Its length is defined by its flexible shoulder domain. The soulder is composed of 2 DCTN1 subunits, 4 DCTN2 and 2 DCTN3. DCTN1/p150(glued) binds directly to microtubules and to cytoplasmic dynein.

The protein resides in the cytoplasm. Its subcellular location is the cytoskeleton. It localises to the microtubule organizing center. The protein localises to the centrosome. It is found in the centriole. The protein resides in the spindle. Its subcellular location is the cell cortex. Part of the dynactin complex that activates the molecular motor dynein for ultra-processive transport along microtubules. Plays a key role in dynein-mediated retrograde transport of vesicles and organelles along microtubules by recruiting and tethering dynein to microtubules. Binds to both dynein and microtubules providing a link between specific cargos, microtubules and dynein. Essential for targeting dynein to microtubule plus ends, recruiting dynein to membranous cargos and enhancing dynein processivity (the ability to move along a microtubule for a long distance without falling off the track). Can also act as a brake to slow the dynein motor during motility along the microtubule. Can regulate microtubule stability by promoting microtubule formation, nucleation and polymerization and by inhibiting microtubule catastrophe in neurons. Inhibits microtubule catastrophe by binding both to microtubules and to tubulin, leading to enhanced microtubule stability along the axon. Plays a role in metaphase spindle orientation. Plays a role in centriole cohesion and subdistal appendage organization and function. Its recruitment to the centriole in a KIF3A-dependent manner is essential for the maintenance of centriole cohesion and the formation of subdistal appendage. Also required for microtubule anchoring at the mother centriole. Plays a role in primary cilia formation. This is Dynactin subunit 1 (dctn1) from Xenopus laevis (African clawed frog).